Here is a 203-residue protein sequence, read N- to C-terminus: ATP-dependent Clp protease proteolytic subunit 2 (203 aa).

Ser97 functions as the Nucleophile in the catalytic mechanism. The active site involves His122.

Belongs to the peptidase S14 family. Fourteen ClpP subunits assemble into 2 heptameric rings which stack back to back to give a disk-like structure with a central cavity, resembling the structure of eukaryotic proteasomes.

Its subcellular location is the cytoplasm. The catalysed reaction is Hydrolysis of proteins to small peptides in the presence of ATP and magnesium. alpha-casein is the usual test substrate. In the absence of ATP, only oligopeptides shorter than five residues are hydrolyzed (such as succinyl-Leu-Tyr-|-NHMec, and Leu-Tyr-Leu-|-Tyr-Trp, in which cleavage of the -Tyr-|-Leu- and -Tyr-|-Trp bonds also occurs).. Functionally, cleaves peptides in various proteins in a process that requires ATP hydrolysis. Has a chymotrypsin-like activity. Plays a major role in the degradation of misfolded proteins. The protein is ATP-dependent Clp protease proteolytic subunit 2 of Myxococcus xanthus (strain DK1622).